A 215-amino-acid polypeptide reads, in one-letter code: Cytidylate kinase (215 aa).

Residue 10–18 (GPAASGKGT) coordinates ATP.

It belongs to the cytidylate kinase family. Type 1 subfamily.

The protein localises to the cytoplasm. It catalyses the reaction CMP + ATP = CDP + ADP. The catalysed reaction is dCMP + ATP = dCDP + ADP. This chain is Cytidylate kinase, found in Bartonella henselae (strain ATCC 49882 / DSM 28221 / CCUG 30454 / Houston 1) (Rochalimaea henselae).